The chain runs to 85 residues: MEKLTVLILVATVLLTIQVLAQSDGDKHLMKRSKQYATKRLSALMRGHRQCIPQNVSCEEDDECCSNLECKCTSAPDCNFPKCRA.

Residues 1–23 form the signal peptide; that stretch reads MEKLTVLILVATVLLTIQVLAQS. A propeptide spanning residues 24–49 is cleaved from the precursor; sequence DGDKHLMKRSKQYATKRLSALMRGHR. Gln-50 carries the post-translational modification Pyrrolidone carboxylic acid.

This sequence belongs to the conotoxin O2 superfamily. In terms of processing, contains 4 disulfide bonds. In terms of tissue distribution, expressed by the venom duct.

The protein localises to the secreted. The protein is Conotoxin Vx15a of Conus vexillum (Flag cone).